The chain runs to 383 residues: Succinyl-diaminopimelate desuccinylase (383 aa).

H69 is a binding site for Zn(2+). D71 is a catalytic residue. D103 serves as a coordination point for Zn(2+). Catalysis depends on E137, which acts as the Proton acceptor. 3 residues coordinate Zn(2+): E138, E166, and H357.

The protein belongs to the peptidase M20A family. DapE subfamily. In terms of assembly, homodimer. The cofactor is Zn(2+). Co(2+) is required as a cofactor.

The enzyme catalyses N-succinyl-(2S,6S)-2,6-diaminopimelate + H2O = (2S,6S)-2,6-diaminopimelate + succinate. Its pathway is amino-acid biosynthesis; L-lysine biosynthesis via DAP pathway; LL-2,6-diaminopimelate from (S)-tetrahydrodipicolinate (succinylase route): step 3/3. Catalyzes the hydrolysis of N-succinyl-L,L-diaminopimelic acid (SDAP), forming succinate and LL-2,6-diaminopimelate (DAP), an intermediate involved in the bacterial biosynthesis of lysine and meso-diaminopimelic acid, an essential component of bacterial cell walls. In Rickettsia typhi (strain ATCC VR-144 / Wilmington), this protein is Succinyl-diaminopimelate desuccinylase.